Consider the following 394-residue polypeptide: Elongation factor Tu (394 aa).

Residues 10–204 (KPHVNVGTIG…ALDSYIPTPE (195 aa)) form the tr-type G domain. Positions 19–26 (GHVDHGKT) are G1. 19-26 (GHVDHGKT) contributes to the GTP binding site. Threonine 26 lines the Mg(2+) pocket. The G2 stretch occupies residues 60-64 (GITIN). The segment at 81–84 (DCPG) is G3. GTP-binding positions include 81–85 (DCPGH) and 136–139 (NKCD). The segment at 136–139 (NKCD) is G4. The G5 stretch occupies residues 174–176 (SAL).

It belongs to the TRAFAC class translation factor GTPase superfamily. Classic translation factor GTPase family. EF-Tu/EF-1A subfamily. In terms of assembly, monomer.

It localises to the cytoplasm. It catalyses the reaction GTP + H2O = GDP + phosphate + H(+). In terms of biological role, GTP hydrolase that promotes the GTP-dependent binding of aminoacyl-tRNA to the A-site of ribosomes during protein biosynthesis. The sequence is that of Elongation factor Tu from Neisseria meningitidis serogroup A / serotype 4A (strain DSM 15465 / Z2491).